The primary structure comprises 332 residues: Ketol-acid reductoisomerase (NADP(+)) (332 aa).

Positions M1 to T182 constitute a KARI N-terminal Rossmann domain. NADP(+) is bound by residues Y25–Q28, K48, S53, and D83–Q86. The active site involves H108. NADP(+) is bound at residue G134. Residues A183–D329 enclose the KARI C-terminal knotted domain. The Mg(2+) site is built by D191, E195, E227, and E231. Position 252 (S252) interacts with substrate.

This sequence belongs to the ketol-acid reductoisomerase family. Mg(2+) is required as a cofactor.

It catalyses the reaction (2R)-2,3-dihydroxy-3-methylbutanoate + NADP(+) = (2S)-2-acetolactate + NADPH + H(+). The catalysed reaction is (2R,3R)-2,3-dihydroxy-3-methylpentanoate + NADP(+) = (S)-2-ethyl-2-hydroxy-3-oxobutanoate + NADPH + H(+). Its pathway is amino-acid biosynthesis; L-isoleucine biosynthesis; L-isoleucine from 2-oxobutanoate: step 2/4. It functions in the pathway amino-acid biosynthesis; L-valine biosynthesis; L-valine from pyruvate: step 2/4. Its function is as follows. Involved in the biosynthesis of branched-chain amino acids (BCAA). Catalyzes an alkyl-migration followed by a ketol-acid reduction of (S)-2-acetolactate (S2AL) to yield (R)-2,3-dihydroxy-isovalerate. In the isomerase reaction, S2AL is rearranged via a Mg-dependent methyl migration to produce 3-hydroxy-3-methyl-2-ketobutyrate (HMKB). In the reductase reaction, this 2-ketoacid undergoes a metal-dependent reduction by NADPH to yield (R)-2,3-dihydroxy-isovalerate. The protein is Ketol-acid reductoisomerase (NADP(+)) of Nitrosopumilus maritimus (strain SCM1).